The primary structure comprises 48 residues: Cytochrome b559 subunit beta (48 aa).

Residues 23-39 (WLAVHALAIPSVFFLGS) form a helical membrane-spanning segment. Heme is bound at residue His-27.

Belongs to the PsbE/PsbF family. Heterodimer of an alpha subunit and a beta subunit. PSII is composed of 1 copy each of membrane proteins PsbA, PsbB, PsbC, PsbD, PsbE, PsbF, PsbH, PsbI, PsbJ, PsbK, PsbL, PsbM, PsbT, PsbX, PsbY, Psb30/Ycf12, peripheral proteins PsbO, CyanoQ (PsbQ), PsbU, PsbV and a large number of cofactors. It forms dimeric complexes. The cofactor is heme b.

The protein resides in the cellular thylakoid membrane. Its function is as follows. This b-type cytochrome is tightly associated with the reaction center of photosystem II (PSII). PSII is a light-driven water:plastoquinone oxidoreductase that uses light energy to abstract electrons from H(2)O, generating O(2) and a proton gradient subsequently used for ATP formation. It consists of a core antenna complex that captures photons, and an electron transfer chain that converts photonic excitation into a charge separation. This is Cytochrome b559 subunit beta from Prochlorococcus marinus (strain MIT 9301).